The sequence spans 159 residues: Putative 4-hydroxy-4-methyl-2-oxoglutarate aldolase (159 aa).

Substrate is bound by residues G74–L77 and R96. D97 is an a divalent metal cation binding site.

Belongs to the class II aldolase/RraA-like family. In terms of assembly, homotrimer. It depends on a divalent metal cation as a cofactor.

It catalyses the reaction 4-hydroxy-4-methyl-2-oxoglutarate = 2 pyruvate. The enzyme catalyses oxaloacetate + H(+) = pyruvate + CO2. In terms of biological role, catalyzes the aldol cleavage of 4-hydroxy-4-methyl-2-oxoglutarate (HMG) into 2 molecules of pyruvate. Also contains a secondary oxaloacetate (OAA) decarboxylase activity due to the common pyruvate enolate transition state formed following C-C bond cleavage in the retro-aldol and decarboxylation reactions. In Bacillus cereus (strain ZK / E33L), this protein is Putative 4-hydroxy-4-methyl-2-oxoglutarate aldolase.